Here is a 412-residue protein sequence, read N- to C-terminus: Clamp protein VP6 (412 aa).

It belongs to the reoviridae clamp protein family. In terms of assembly, interacts with capsid proteins VP3, VP5 and VP7.

The protein resides in the virion. In terms of biological role, located at the interface of the incomplete T=13 outer capsid and the pseudo T=2 inner capsid, 120 VP6 subunits clamp and stabilizes the inner capsid shell. This is Clamp protein VP6 (S8) from Aquareovirus C (isolate Golden shiner/USA/GSRV/1977) (AQRV-C).